We begin with the raw amino-acid sequence, 207 residues long: NADH-quinone oxidoreductase subunit C (207 aa).

Belongs to the complex I 30 kDa subunit family. NDH-1 is composed of 14 different subunits. Subunits NuoB, C, D, E, F, and G constitute the peripheral sector of the complex.

The protein resides in the cell inner membrane. It carries out the reaction a quinone + NADH + 5 H(+)(in) = a quinol + NAD(+) + 4 H(+)(out). Its function is as follows. NDH-1 shuttles electrons from NADH, via FMN and iron-sulfur (Fe-S) centers, to quinones in the respiratory chain. The immediate electron acceptor for the enzyme in this species is believed to be ubiquinone. Couples the redox reaction to proton translocation (for every two electrons transferred, four hydrogen ions are translocated across the cytoplasmic membrane), and thus conserves the redox energy in a proton gradient. This chain is NADH-quinone oxidoreductase subunit C, found in Jannaschia sp. (strain CCS1).